An 847-amino-acid chain; its full sequence is Beta-galactosidase 1 (847 aa).

Residues 1–32 (MGSKPNAMKNVVAMAAVSALFLLGFLVCSVSG) form the signal peptide. Glutamate 190 serves as the catalytic Proton donor. Glutamate 259 serves as the catalytic Nucleophile. Asparagine 469 carries an N-linked (GlcNAc...) asparagine glycan. The 87-residue stretch at 761 to 847 (KPLHPKAHLQ…KKLAVEAVCA (87 aa)) folds into the SUEL-type lectin domain.

Belongs to the glycosyl hydrolase 35 family. As to expression, ubiquitous, at low levels.

It localises to the secreted. Its subcellular location is the extracellular space. The protein resides in the apoplast. It carries out the reaction Hydrolysis of terminal non-reducing beta-D-galactose residues in beta-D-galactosides.. This is Beta-galactosidase 1 (BGAL1) from Arabidopsis thaliana (Mouse-ear cress).